The primary structure comprises 854 residues: Selenocysteine insertion sequence-binding protein 2 (854 aa).

4 disordered regions span residues 332 to 351, 356 to 394, 417 to 445, and 488 to 619; these read ADPKNVSIPSSEALSSDPSY, HIIHPTQKSKASQGSDLEQNEASRKNKKKKEKSTSKYEV, ERRDRIETPKFQSKQQPQDNFKNNVKKSQ, and ECAS…PNHT. Composition is skewed to polar residues over residues 338 to 350 and 361 to 372; these read SIPSSEALSSDPS and TQKSKASQGSDL. The Nuclear localization signal motif lies at 380 to 387; the sequence is KNKKKKEK. Polar residues predominate over residues 426 to 445; the sequence is KFQSKQQPQDNFKNNVKKSQ. Basic and acidic residues predominate over residues 536–547; it reads ILKERQERKQRL. A compositionally biased stretch (polar residues) spans 548–559; sequence QENAVSPAFTSD. A compositionally biased stretch (acidic residues) spans 560–572; sequence DTQDGESGGDDQF. The segment covering 593–611 has biased composition (basic and acidic residues); that stretch reads VEDKSEEPPGTELQRDTEA. Residues 673-694 form an RNA-binding region; that stretch reads LVLGLREVLKHLKLKKLKCVII. Positions 787–812 are disordered; sequence EPRPQAPPSLPTQGPSCPAEDGPPAL.

Expressed at high levels in testis.

It localises to the nucleus. The protein localises to the mitochondrion. In terms of biological role, mRNA-binding protein that binds to the SECIS (selenocysteine insertion sequence) element present in the 3'-UTR of mRNAs encoding selenoproteins and facilitates the incorporation of the rare amino acid selenocysteine. Insertion of selenocysteine at UGA codons is mediated by SECISBP2 and EEFSEC: SECISBP2 (1) specifically binds the SECIS sequence once the 80S ribosome encounters an in-frame UGA codon and (2) contacts the RPS27A/eS31 of the 40S ribosome before ribosome stalling. (3) GTP-bound EEFSEC then delivers selenocysteinyl-tRNA(Sec) to the 80S ribosome and adopts a preaccommodated state conformation. (4) After GTP hydrolysis, EEFSEC dissociates from the assembly, selenocysteinyl-tRNA(Sec) accommodates, and peptide bond synthesis and selenoprotein elongation occur. The polypeptide is Selenocysteine insertion sequence-binding protein 2 (Homo sapiens (Human)).